The following is a 33-amino-acid chain: Cytochrome b6-f complex subunit 8 (33 aa).

The helical transmembrane segment at 2–22 (LFTLAWASLAAVFSFSIAMVV) threads the bilayer.

This sequence belongs to the PetN family. The 4 large subunits of the cytochrome b6-f complex are cytochrome b6, subunit IV (17 kDa polypeptide, PetD), cytochrome f and the Rieske protein, while the 4 small subunits are PetG, PetL, PetM and PetN. The complex functions as a dimer.

Its subcellular location is the cellular thylakoid membrane. Its function is as follows. Component of the cytochrome b6-f complex, which mediates electron transfer between photosystem II (PSII) and photosystem I (PSI), cyclic electron flow around PSI, and state transitions. This is Cytochrome b6-f complex subunit 8 from Synechococcus sp. (strain WH7803).